The primary structure comprises 285 residues: Bifunctional protein FolD (285 aa).

NADP(+) is bound by residues 166 to 168 (GAS) and Ile232.

Belongs to the tetrahydrofolate dehydrogenase/cyclohydrolase family. In terms of assembly, homodimer.

It catalyses the reaction (6R)-5,10-methylene-5,6,7,8-tetrahydrofolate + NADP(+) = (6R)-5,10-methenyltetrahydrofolate + NADPH. The catalysed reaction is (6R)-5,10-methenyltetrahydrofolate + H2O = (6R)-10-formyltetrahydrofolate + H(+). It participates in one-carbon metabolism; tetrahydrofolate interconversion. Functionally, catalyzes the oxidation of 5,10-methylenetetrahydrofolate to 5,10-methenyltetrahydrofolate and then the hydrolysis of 5,10-methenyltetrahydrofolate to 10-formyltetrahydrofolate. This is Bifunctional protein FolD from Baumannia cicadellinicola subsp. Homalodisca coagulata.